A 224-amino-acid polypeptide reads, in one-letter code: Phosphoribosylformylglycinamidine synthase subunit PurQ (224 aa).

The region spanning 4-224 is the Glutamine amidotransferase type-1 domain; the sequence is RIGVITFPGT…YSALDSVLAS (221 aa). Residue cysteine 87 is the Nucleophile of the active site. Catalysis depends on residues histidine 195 and glutamate 197.

As to quaternary structure, part of the FGAM synthase complex composed of 1 PurL, 1 PurQ and 2 PurS subunits.

It is found in the cytoplasm. The enzyme catalyses N(2)-formyl-N(1)-(5-phospho-beta-D-ribosyl)glycinamide + L-glutamine + ATP + H2O = 2-formamido-N(1)-(5-O-phospho-beta-D-ribosyl)acetamidine + L-glutamate + ADP + phosphate + H(+). It carries out the reaction L-glutamine + H2O = L-glutamate + NH4(+). The protein operates within purine metabolism; IMP biosynthesis via de novo pathway; 5-amino-1-(5-phospho-D-ribosyl)imidazole from N(2)-formyl-N(1)-(5-phospho-D-ribosyl)glycinamide: step 1/2. Part of the phosphoribosylformylglycinamidine synthase complex involved in the purines biosynthetic pathway. Catalyzes the ATP-dependent conversion of formylglycinamide ribonucleotide (FGAR) and glutamine to yield formylglycinamidine ribonucleotide (FGAM) and glutamate. The FGAM synthase complex is composed of three subunits. PurQ produces an ammonia molecule by converting glutamine to glutamate. PurL transfers the ammonia molecule to FGAR to form FGAM in an ATP-dependent manner. PurS interacts with PurQ and PurL and is thought to assist in the transfer of the ammonia molecule from PurQ to PurL. The chain is Phosphoribosylformylglycinamidine synthase subunit PurQ from Mycobacterium leprae (strain TN).